The following is an 802-amino-acid chain: LPS-assembly protein LptD (802 aa).

Positions 1–25 are cleaved as a signal peptide; it reads MARLFSLKPLVLALGLCFGTHCAAA.

The protein belongs to the LptD family. As to quaternary structure, component of the lipopolysaccharide transport and assembly complex. Interacts with LptE and LptA.

The protein localises to the cell outer membrane. In terms of biological role, together with LptE, is involved in the assembly of lipopolysaccharide (LPS) at the surface of the outer membrane. In Neisseria meningitidis serogroup B (strain ATCC BAA-335 / MC58), this protein is LPS-assembly protein LptD.